An 83-amino-acid polypeptide reads, in one-letter code: Small ribosomal subunit protein uS17 (83 aa).

Belongs to the universal ribosomal protein uS17 family. Part of the 30S ribosomal subunit.

In terms of biological role, one of the primary rRNA binding proteins, it binds specifically to the 5'-end of 16S ribosomal RNA. This chain is Small ribosomal subunit protein uS17, found in Campylobacter hominis (strain ATCC BAA-381 / DSM 21671 / CCUG 45161 / LMG 19568 / NCTC 13146 / CH001A).